We begin with the raw amino-acid sequence, 868 residues long: Probable beta-glucosidase F (868 aa).

The N-terminal stretch at 1–20 (MAHRWLILALVAAAAPRALA) is a signal peptide. The segment at 21-40 (SPGPSLNERQSDDEPFSPPY) is disordered. N-linked (GlcNAc...) asparagine glycans are attached at residues asparagine 65, asparagine 73, and asparagine 257. Aspartate 285 is a catalytic residue. Asparagine 328, asparagine 360, asparagine 395, asparagine 421, and asparagine 726 each carry an N-linked (GlcNAc...) asparagine glycan. Positions 731-752 (YPYPDGYSTDPQPPPRAGGAEG) are disordered.

It belongs to the glycosyl hydrolase 3 family.

It localises to the secreted. It catalyses the reaction Hydrolysis of terminal, non-reducing beta-D-glucosyl residues with release of beta-D-glucose.. It participates in glycan metabolism; cellulose degradation. Functionally, beta-glucosidases are one of a number of cellulolytic enzymes involved in the degradation of cellulosic biomass. Catalyzes the last step releasing glucose from the inhibitory cellobiose. This chain is Probable beta-glucosidase F (bglF), found in Emericella nidulans (strain FGSC A4 / ATCC 38163 / CBS 112.46 / NRRL 194 / M139) (Aspergillus nidulans).